Here is a 127-residue protein sequence, read N- to C-terminus: Small ribosomal subunit protein uS11 (127 aa).

Belongs to the universal ribosomal protein uS11 family. As to quaternary structure, part of the 30S ribosomal subunit. Interacts with proteins S7 and S18. Binds to IF-3.

Located on the platform of the 30S subunit, it bridges several disparate RNA helices of the 16S rRNA. Forms part of the Shine-Dalgarno cleft in the 70S ribosome. This Rickettsia bellii (strain RML369-C) protein is Small ribosomal subunit protein uS11.